The sequence spans 303 residues: Polyisoprenyl-teichoic acid--peptidoglycan teichoic acid transferase TagU (303 aa).

The Cytoplasmic segment spans residues 1–6 (MSKGKK). Residues 7–27 (IFAIIFGIILVLFLAVVGMGA) form a helical; Signal-anchor for type II membrane protein membrane-spanning segment. The Extracellular segment spans residues 28-303 (KLYWDVSKSM…QELKNQLNTK (276 aa)).

It belongs to the LytR/CpsA/Psr (LCP) family.

The protein localises to the cell membrane. It participates in cell wall biogenesis. In terms of biological role, may catalyze the final step in cell wall teichoic acid biosynthesis, the transfer of the anionic cell wall polymers (APs) from their lipid-linked precursor to the cell wall peptidoglycan (PG). This chain is Polyisoprenyl-teichoic acid--peptidoglycan teichoic acid transferase TagU, found in Enterococcus faecalis (strain ATCC 700802 / V583).